Consider the following 444-residue polypeptide: Phosphoglucosamine mutase (444 aa).

Catalysis depends on serine 102, which acts as the Phosphoserine intermediate. The Mg(2+) site is built by serine 102, aspartate 241, aspartate 243, and aspartate 245. Serine 102 is modified (phosphoserine).

The protein belongs to the phosphohexose mutase family. Mg(2+) is required as a cofactor. Activated by phosphorylation.

The enzyme catalyses alpha-D-glucosamine 1-phosphate = D-glucosamine 6-phosphate. Functionally, catalyzes the conversion of glucosamine-6-phosphate to glucosamine-1-phosphate. In Actinobacillus succinogenes (strain ATCC 55618 / DSM 22257 / CCUG 43843 / 130Z), this protein is Phosphoglucosamine mutase.